Reading from the N-terminus, the 251-residue chain is MSAGRLNKKSLGIVMLLSVGLLLAGCSGSKSSDTGTYSGSVYTVKRGDTLYRISRTTGTSVKELARLNGISPPYTIEVGQKLKLGGAKSSSITRKSTAKSTTKTASVTPSSAVPKSSWPPVGQRCWLWPTTGKVIMPYSTADGGNKGIDISAPRGTPIYAAGAGKVVYVGNQLRGYGNLIMIKHSEDYITAYAHNDTMLVNNGQSVKAGQKIATMGSTDAASVRLHFQIRYRATAIDPLRYLPPQGSKPKC.

The N-terminal stretch at 1–25 is a signal peptide; sequence MSAGRLNKKSLGIVMLLSVGLLLAG. Cys-26 carries N-palmitoyl cysteine lipidation. Cys-26 is lipidated: S-diacylglycerol cysteine. The LysM domain occupies 40-84; that stretch reads SVYTVKRGDTLYRISRTTGTSVKELARLNGISPPYTIEVGQKLKL. The segment covering 93-112 has biased composition (low complexity); the sequence is TRKSTAKSTTKTASVTPSSA. Residues 93–115 are disordered; it reads TRKSTAKSTTKTASVTPSSAVPK.

The protein belongs to the peptidase M23B family.

The protein localises to the cell inner membrane. This is an uncharacterized protein from Escherichia coli (strain K12).